A 195-amino-acid chain; its full sequence is Molybdopterin synthase catalytic subunit (195 aa).

The disordered stretch occupies residues 1-37 (MSARPEPQPGSERNATEPLPSHLDPTTYPRTLTTTHG). Positions 25–37 (PTTYPRTLTTTHG) are enriched in low complexity. Substrate is bound by residues 141–142 (HR), Lys-157, and 164–166 (KRE).

This sequence belongs to the MoaE family. MOCS2B subfamily. Heterotetramer; composed of 2 small (MOCS2A) and 2 large (MOCS2B) subunits.

The protein resides in the cytoplasm. It catalyses the reaction 2 [molybdopterin-synthase sulfur-carrier protein]-C-terminal-Gly-aminoethanethioate + cyclic pyranopterin phosphate + H2O = molybdopterin + 2 [molybdopterin-synthase sulfur-carrier protein]-C-terminal Gly-Gly + 2 H(+). Its pathway is cofactor biosynthesis; molybdopterin biosynthesis. In terms of biological role, catalytic subunit of the molybdopterin synthase complex, a complex that catalyzes the conversion of precursor Z into molybdopterin. Acts by mediating the incorporation of 2 sulfur atoms from thiocarboxylated MOCS2A into precursor Z to generate a dithiolene group. The protein is Molybdopterin synthase catalytic subunit of Emericella nidulans (strain FGSC A4 / ATCC 38163 / CBS 112.46 / NRRL 194 / M139) (Aspergillus nidulans).